The chain runs to 130 residues: Small ribosomal subunit protein uS11 (130 aa).

This sequence belongs to the universal ribosomal protein uS11 family. As to quaternary structure, part of the 30S ribosomal subunit. Interacts with proteins S7 and S18. Binds to IF-3.

Its function is as follows. Located on the platform of the 30S subunit, it bridges several disparate RNA helices of the 16S rRNA. Forms part of the Shine-Dalgarno cleft in the 70S ribosome. The sequence is that of Small ribosomal subunit protein uS11 from Helicobacter hepaticus (strain ATCC 51449 / 3B1).